The sequence spans 275 residues: Pyridoxal phosphate homeostasis protein (275 aa).

Phosphoserine is present on Ser6. Residue Lys47 is modified to N6-(pyridoxal phosphate)lysine. Residue Tyr69 is modified to Phosphotyrosine. An N6-succinyllysine modification is found at Lys125. Residues Ser226 and Ser244 each carry the phosphoserine modification. Positions 251–263 are enriched in basic and acidic residues; the sequence is DYSKKPTPDKCAA. Residues 251-275 form a disordered region; sequence DYSKKPTPDKCAADVKAPLEVAQEH.

This sequence belongs to the pyridoxal phosphate-binding protein YggS/PROSC family. As to expression, ubiquitous.

In terms of biological role, pyridoxal 5'-phosphate (PLP)-binding protein, which may be involved in intracellular homeostatic regulation of pyridoxal 5'-phosphate (PLP), the active form of vitamin B6. This chain is Pyridoxal phosphate homeostasis protein, found in Homo sapiens (Human).